The chain runs to 177 residues: Large ribosomal subunit protein uL6 (177 aa).

It belongs to the universal ribosomal protein uL6 family. As to quaternary structure, part of the 50S ribosomal subunit.

In terms of biological role, this protein binds to the 23S rRNA, and is important in its secondary structure. It is located near the subunit interface in the base of the L7/L12 stalk, and near the tRNA binding site of the peptidyltransferase center. The sequence is that of Large ribosomal subunit protein uL6 from Halorhodospira halophila (strain DSM 244 / SL1) (Ectothiorhodospira halophila (strain DSM 244 / SL1)).